Consider the following 142-residue polypeptide: Salivary protein 15a (142 aa).

Positions 1-20 (MKYLGLALISAVFLIGACQA) are cleaved as a signal peptide. Disulfide bonds link C27–C44, C40–C108, and C91–C117.

It belongs to the PBP/GOBP family. As to expression, female salivary gland (at protein level).

Its subcellular location is the secreted. Inhibits contact coagulation pathway activation in the host by sequestering anionic polymers, such as polyphosphate and dextran sulfate, and thus blocking interaction of protein components of the pathway with negatively charged surfaces. Inhibits dextran sulfate-mediated autoactivation of host coagulation factor XII (F12). Inhibits dextran sulfate-mediated autoactivation of host factor XI (F11). Inhibits polyphosphate-mediated activation of host F11 by thrombin (F2). May inhibit dextran sulfate-mediated bradykinin generation in host plasma. In Phlebotomus duboscqi (Sandfly), this protein is Salivary protein 15a.